The primary structure comprises 145 residues: MRVVLQRVKEASVTVEGTVAGQIDQGFLLLVGVTHDDTLEQVNWLADKIAGLRVFEDEEERMNRSLQDVEGKILSVSQFTLYGDVKKGRRPAFTEAAKPDVANELYEAFNARLRQQGIIVETGQFGAMMDVALVNDGPVTLILEK.

Residues 137 to 138 (GP) carry the Gly-cisPro motif, important for rejection of L-amino acids motif.

It belongs to the DTD family. Homodimer.

Its subcellular location is the cytoplasm. The catalysed reaction is glycyl-tRNA(Ala) + H2O = tRNA(Ala) + glycine + H(+). It catalyses the reaction a D-aminoacyl-tRNA + H2O = a tRNA + a D-alpha-amino acid + H(+). In terms of biological role, an aminoacyl-tRNA editing enzyme that deacylates mischarged D-aminoacyl-tRNAs. Also deacylates mischarged glycyl-tRNA(Ala), protecting cells against glycine mischarging by AlaRS. Acts via tRNA-based rather than protein-based catalysis; rejects L-amino acids rather than detecting D-amino acids in the active site. By recycling D-aminoacyl-tRNA to D-amino acids and free tRNA molecules, this enzyme counteracts the toxicity associated with the formation of D-aminoacyl-tRNA entities in vivo and helps enforce protein L-homochirality. The protein is D-aminoacyl-tRNA deacylase of Exiguobacterium sibiricum (strain DSM 17290 / CCUG 55495 / CIP 109462 / JCM 13490 / 255-15).